Reading from the N-terminus, the 784-residue chain is ent-copalyl diphosphate synthase 2, chloroplastic (784 aa).

The transit peptide at 1–57 (MSMTLFASVTRPGLPGPTALRFPETRHLFHSVTAFAASFSPSKSSVGSSQCNATTPP) directs the protein to the chloroplast. Residue K242 coordinates substrate. Positions 379 and 381 each coordinate Mg(2+). The DXDD motif motif lies at 379–382 (DIDD). Residue K466 coordinates substrate.

The protein belongs to the terpene synthase family. The cofactor is Mg(2+). Present in both leaves and flowers.

It is found in the plastid. It localises to the chloroplast. The protein operates within plant hormone biosynthesis; gibberellin biosynthesis. It functions in the pathway secondary metabolite biosynthesis; terpenoid biosynthesis. Involved in the biosynthesis of labdane-type diterpenoid including marrubiin and other labdane-related furanoid diterpenoids with potential applications as anti-diabetics, analgesics or vasorelaxants. May be involved in the conversion of geranylgeranyl diphosphate (GGPP) to ent-copalyl diphosphate (ent-CPP) and 8-hydroxycopalyl diphosphate (LPP, labda-13-en-8-ol diphosphate). The protein is ent-copalyl diphosphate synthase 2, chloroplastic of Marrubium vulgare (White horehound).